The following is a 625-amino-acid chain: Baeyer-Villiger monooxygenase ATR8 (625 aa).

Residues Asp-112, 120–123 (TWYW), Asp-132, and Tyr-138 contribute to the FAD site. An NADP(+)-binding site is contributed by 130–132 (QCD). Residues 266 to 272 (TGATAIQ), 289 to 290 (RT), and 405 to 406 (KR) each bind NADP(+).

The protein belongs to the FAD-binding monooxygenase family. It depends on FAD as a cofactor.

It participates in mycotoxin biosynthesis. Functionally, baeyer-Villiger monooxygenase; part of the core atranone cluster (CAC) which products are predicted to catalyze most or all steps of mycotoxin atranone synthesis, starting from geranylgeranyl pyrophosphate (GGPP). The initial cyclization of GGPP to dolabellane is probably performed by the terpene cyclase ATR13. The Baeyer-Villiger oxidation near the end of the atranone synthesis, which converts atranones D and E to atranones F and G is predicted to be catalyzed by the monooxygenase ATR8. Of the CAC's other predicted gene products, the reducing PKS ATR6 might synthesize a polyketide chain. This polyketide is probably transferred onto the atranone backbone by the polyketide transferase ATR5. Other predicted CAC products include 4 oxygenases (ATR2, ATR3, ATR4, and ATR14), 3 short-chain reductases (ATR7, ATR9, and ATR10), and a methyltransferase (ATR12). These may all be involved in the various steps of atranone biosynthesis, although their specific roles must await experimental determination. The polypeptide is Baeyer-Villiger monooxygenase ATR8 (Stachybotrys chlorohalonatus (strain IBT 40285)).